Here is a 72-residue protein sequence, read N- to C-terminus: Potassium channel toxin epsilon-KTx 1.1 (72 aa).

The signal sequence occupies residues 1-30 (MKLSCGFLLILLVLSAMIATFSEVEAMKPS). 4 disulfides stabilise this stretch: Cys-34-Cys-42, Cys-37-Cys-58, Cys-41-Cys-51, and Cys-46-Cys-56. Residues 60–72 (GRSDLNDELEKYQ) constitute a propeptide that is removed on maturation.

Belongs to the short scorpion toxin superfamily. Potassium channel inhibitor family. Epsilon-KTx 01 subfamily. As to expression, expressed by the venom gland.

It localises to the secreted. Its function is as follows. Potassium channel blocker. At 3 uM, this toxin blocks voltage-independently voltage-gated potassium channels rKv1.2/KCNA2 (25%), hKv1.3/KCNA3 (27%), rKv4.2/KCND2 (25%), Kv10.1/KCNH1/EAG1 (15%), Kv11/hERG (12%), and Shaker-IR (10%). On hKv1.3/KCNA3, the IC(50) is 17.1 +-3.3 uM. The chain is Potassium channel toxin epsilon-KTx 1.1 from Tityus serrulatus (Brazilian scorpion).